Consider the following 217-residue polypeptide: Ribosomal RNA small subunit methyltransferase G (217 aa).

S-adenosyl-L-methionine is bound by residues Gly-79, Phe-84, 130–131 (AE), and Arg-148.

It belongs to the methyltransferase superfamily. RNA methyltransferase RsmG family.

The protein resides in the cytoplasm. The enzyme catalyses guanosine(527) in 16S rRNA + S-adenosyl-L-methionine = N(7)-methylguanosine(527) in 16S rRNA + S-adenosyl-L-homocysteine. Functionally, specifically methylates the N7 position of guanine in position 527 of 16S rRNA. This chain is Ribosomal RNA small subunit methyltransferase G, found in Myxococcus xanthus (strain DK1622).